Consider the following 204-residue polypeptide: Translation initiation factor 2 subunit beta (204 aa).

One can recognise a TRAM domain in the interval 146-204 (NLEEGQVLDVEIQSLSKRGDGVVKMGRYIMYVSNAKPGQSVKIKISRISGSIVFTERAE).

This sequence belongs to the eIF-2-beta/eIF-5 family. In terms of assembly, heterotrimer composed of an alpha, a beta and a gamma chain.

In terms of biological role, eIF-2 functions in the early steps of protein synthesis by forming a ternary complex with GTP and initiator tRNA. This Methanoregula boonei (strain DSM 21154 / JCM 14090 / 6A8) protein is Translation initiation factor 2 subunit beta.